The sequence spans 395 residues: Galactokinase (395 aa).

39-42 (EHTD) lines the substrate pocket. ATP-binding positions include S73 and 127-133 (GAGLSSS). Mg(2+) is bound by residues S133 and E165. Residue D177 is the Proton acceptor of the active site. Y227 serves as a coordination point for substrate.

It belongs to the GHMP kinase family. GalK subfamily.

It localises to the cytoplasm. It catalyses the reaction alpha-D-galactose + ATP = alpha-D-galactose 1-phosphate + ADP + H(+). The protein operates within carbohydrate metabolism; galactose metabolism. Functionally, catalyzes the transfer of the gamma-phosphate of ATP to D-galactose to form alpha-D-galactose-1-phosphate (Gal-1-P). The protein is Galactokinase of Halalkalibacterium halodurans (strain ATCC BAA-125 / DSM 18197 / FERM 7344 / JCM 9153 / C-125) (Bacillus halodurans).